A 279-amino-acid chain; its full sequence is MLIIELLKALFLGVVEGVTEWLPVSSTGHLILVQEFMKLNQSKSFVEMFNIVIQLGAIMAVIVIYFKRLNPFQPGKSAREIRLTWQLWLKVVIACIPSILIALPFDNWFEAHFNFMIPIAIALIFYGFVFIWVEKRNAHLKPQVTELASMSYKTAFLIGCFQVLSIVPGTSRSGATILGAIIIGTSRSVAADFTFFLAIPTMFGYSGLKAVKYFLDGNVLSLDQSLILLVASLIAFVVSLYVIRFLTDYVKRHDFTIFGKYRIVLGSLLILYWLVVHLF.

The next 6 helical transmembrane spans lie at 45-65 (FVEMFNIVIQLGAIMAVIVIY), 85-105 (WQLWLKVVIACIPSILIALPF), 113-133 (FNFMIPIAIALIFYGFVFIWV), 188-208 (SVAADFTFFLAIPTMFGYSGL), 226-246 (LILLVASLIAFVVSLYVIRFL), and 255-275 (FTIFGKYRIVLGSLLILYWLV).

This sequence belongs to the UppP family.

It is found in the cell membrane. The enzyme catalyses di-trans,octa-cis-undecaprenyl diphosphate + H2O = di-trans,octa-cis-undecaprenyl phosphate + phosphate + H(+). Functionally, catalyzes the dephosphorylation of undecaprenyl diphosphate (UPP). Confers resistance to bacitracin. The polypeptide is Undecaprenyl-diphosphatase (Streptococcus agalactiae serotype Ia (strain ATCC 27591 / A909 / CDC SS700)).